A 158-amino-acid chain; its full sequence is NAD(P)H-quinone oxidoreductase subunit J, chloroplastic (158 aa).

Belongs to the complex I 30 kDa subunit family. NDH is composed of at least 16 different subunits, 5 of which are encoded in the nucleus.

The protein localises to the plastid. The protein resides in the chloroplast thylakoid membrane. The catalysed reaction is a plastoquinone + NADH + (n+1) H(+)(in) = a plastoquinol + NAD(+) + n H(+)(out). It carries out the reaction a plastoquinone + NADPH + (n+1) H(+)(in) = a plastoquinol + NADP(+) + n H(+)(out). Functionally, NDH shuttles electrons from NAD(P)H:plastoquinone, via FMN and iron-sulfur (Fe-S) centers, to quinones in the photosynthetic chain and possibly in a chloroplast respiratory chain. The immediate electron acceptor for the enzyme in this species is believed to be plastoquinone. Couples the redox reaction to proton translocation, and thus conserves the redox energy in a proton gradient. The polypeptide is NAD(P)H-quinone oxidoreductase subunit J, chloroplastic (Capsella bursa-pastoris (Shepherd's purse)).